The chain runs to 419 residues: Acyl-coenzyme A thioesterase 1 (419 aa).

Active-site charge relay system residues include serine 232, aspartate 324, and histidine 358. The residue at position 416 (serine 416) is a Phosphoserine.

This sequence belongs to the C/M/P thioester hydrolase family. As to quaternary structure, monomer. As to expression, expressed in liver.

Its subcellular location is the cytoplasm. The protein resides in the cytosol. The enzyme catalyses hexadecanoyl-CoA + H2O = hexadecanoate + CoA + H(+). The catalysed reaction is dodecanoyl-CoA + H2O = dodecanoate + CoA + H(+). It carries out the reaction tetradecanoyl-CoA + H2O = tetradecanoate + CoA + H(+). It catalyses the reaction decanoyl-CoA + H2O = decanoate + CoA + H(+). The enzyme catalyses octadecanoyl-CoA + H2O = octadecanoate + CoA + H(+). The catalysed reaction is eicosanoyl-CoA + H2O = eicosanoate + CoA + H(+). It carries out the reaction (9Z)-octadecenoyl-CoA + H2O = (9Z)-octadecenoate + CoA + H(+). It catalyses the reaction (9Z)-hexadecenoyl-CoA + H2O = (9Z)-hexadecenoate + CoA + H(+). The enzyme catalyses (9E)-octadecenoyl-CoA + H2O = (9E)-octadecenoate + CoA + H(+). It participates in lipid metabolism; fatty acid metabolism. Catalyzes the hydrolysis of acyl-CoAs into free fatty acids and coenzyme A (CoASH), regulating their respective intracellular levels. More active towards saturated and unsaturated long chain fatty acyl-CoAs (C12-C20). This Rattus norvegicus (Rat) protein is Acyl-coenzyme A thioesterase 1 (Acot1).